Here is a 217-residue protein sequence, read N- to C-terminus: Ribonuclease HII (217 aa).

The RNase H type-2 domain occupies 27-216; sequence RTIAGIDEAG…VREHLGESRC (190 aa). Residues aspartate 33, glutamate 34, and aspartate 125 each coordinate a divalent metal cation.

It belongs to the RNase HII family. Mn(2+) is required as a cofactor. It depends on Mg(2+) as a cofactor.

It localises to the cytoplasm. It carries out the reaction Endonucleolytic cleavage to 5'-phosphomonoester.. In terms of biological role, endonuclease that specifically degrades the RNA of RNA-DNA hybrids. The protein is Ribonuclease HII of Geobacter sulfurreducens (strain ATCC 51573 / DSM 12127 / PCA).